Here is a 448-residue protein sequence, read N- to C-terminus: Carbamoyl phosphate synthase arginine-specific small chain (448 aa).

A mitochondrion-targeting transit peptide spans 1–27 (MFKNIARLASMARSAPRTTASFQTRFM). The region spanning 224-415 (HIAVIDCGVK…LGQVHQYRAA (192 aa)) is the Glutamine amidotransferase type-1 domain. Residue cysteine 304 is the Nucleophile of the active site. Catalysis depends on residues histidine 388 and glutamate 390.

This sequence belongs to the CarA family. As to quaternary structure, heterodimer composed of 2 chains; the small (or glutamine) chain promotes the hydrolysis of glutamine to ammonia, which is used by the large (or ammonia) chain to synthesize carbamoyl phosphate.

Its subcellular location is the mitochondrion matrix. It carries out the reaction hydrogencarbonate + L-glutamine + 2 ATP + H2O = carbamoyl phosphate + L-glutamate + 2 ADP + phosphate + 2 H(+). It catalyses the reaction L-glutamine + H2O = L-glutamate + NH4(+). It participates in amino-acid biosynthesis; L-arginine biosynthesis; carbamoyl phosphate from bicarbonate: step 1/1. Small subunit of the arginine-specific carbamoyl phosphate synthase (CPSase). CPSase catalyzes the formation of carbamoyl phosphate from the ammonia moiety of glutamine, carbonate, and phosphate donated by ATP, the first step of the arginine biosynthetic pathway. The small subunit (glutamine amidotransferase) binds and cleaves glutamine to supply the large subunit with the substrate ammonia. This chain is Carbamoyl phosphate synthase arginine-specific small chain (CPA1), found in Yarrowia lipolytica (strain CLIB 122 / E 150) (Yeast).